The following is a 1068-amino-acid chain: Receptor-like protein 13 (1068 aa).

Residues methionine 1–glycine 23 form the signal peptide. Residues tyrosine 24–glutamate 986 are Extracellular-facing. Residues asparagine 59 and asparagine 97 are each glycosylated (N-linked (GlcNAc...) asparagine). 19 LRR repeats span residues phenylalanine 104–aspartate 129, leucine 139–alanine 162, threonine 164–aspartate 187, leucine 188–serine 212, phenylalanine 216–serine 239, threonine 241–aspartate 264, leucine 265–leucine 290, lysine 292–lysine 315, tryptophan 325–leucine 349, threonine 350–leucine 373, serine 375–asparagine 397, leucine 398–proline 423, lysine 424–glutamine 447, lysine 448–asparagine 471, asparagine 472–leucine 497, phenylalanine 499–tryptophan 517, leucine 519–methionine 543, lysine 544–glycine 567, and tyrosine 569–arginine 594. A glycan (N-linked (GlcNAc...) asparagine) is linked at asparagine 153. An N-linked (GlcNAc...) asparagine glycan is attached at asparagine 202. Asparagine 279 is a glycosylation site (N-linked (GlcNAc...) asparagine). A glycan (N-linked (GlcNAc...) asparagine) is linked at asparagine 397. 3 N-linked (GlcNAc...) asparagine glycosylation sites follow: asparagine 471, asparagine 482, and asparagine 501. 2 N-linked (GlcNAc...) asparagine glycosylation sites follow: asparagine 570 and asparagine 591. One copy of the LRR 20; degenerate repeat lies at tryptophan 596–serine 615. 5 LRR repeats span residues leucine 616 to glutamate 639, glutamine 641 to isoleucine 664, serine 665 to isoleucine 688, histidine 690 to leucine 710, and leucine 711 to glutamine 734. Residue asparagine 663 is glycosylated (N-linked (GlcNAc...) asparagine). Asparagine 700 is a glycosylation site (N-linked (GlcNAc...) asparagine). Residues asparagine 735, asparagine 745, asparagine 771, asparagine 780, and asparagine 822 are each glycosylated (N-linked (GlcNAc...) asparagine). LRR repeat units lie at residues isoleucine 736–leucine 757 and serine 758–threonine 781. LRR repeat units lie at residues leucine 846–leucine 870, valine 871–glycine 893, lysine 895–methionine 918, and serine 920–threonine 943. Asparagine 877 and asparagine 882 each carry an N-linked (GlcNAc...) asparagine glycan. N-linked (GlcNAc...) asparagine glycosylation is found at asparagine 925 and asparagine 930. The chain crosses the membrane as a helical span at residues serine 987–leucine 1007. The Cytoplasmic segment spans residues serine 1008–threonine 1068.

The protein belongs to the RLP family.

The protein localises to the cell membrane. This Arabidopsis thaliana (Mouse-ear cress) protein is Receptor-like protein 13.